A 382-amino-acid polypeptide reads, in one-letter code: Mannitol-1-phosphate 5-dehydrogenase (382 aa).

NAD(+) is bound at residue 3-14; it reads ALHFGAGNIGRG.

This sequence belongs to the mannitol dehydrogenase family.

It carries out the reaction D-mannitol 1-phosphate + NAD(+) = beta-D-fructose 6-phosphate + NADH + H(+). The polypeptide is Mannitol-1-phosphate 5-dehydrogenase (Salmonella typhi).